The chain runs to 467 residues: Rhamnulokinase (467 aa).

11 to 15 (ASSGR) provides a ligand contact to ATP. Substrate is bound by residues Ala78 and 235–237 (HDT). Asp236 functions as the Proton acceptor in the catalytic mechanism. Thr257 contacts ATP. Position 294 (Asn294) interacts with substrate. Residue Gln302 coordinates ATP. Residues Cys351 and Cys368 are joined by a disulfide bond. Gly400 provides a ligand contact to ATP.

It belongs to the rhamnulokinase family. The cofactor is Mg(2+).

It catalyses the reaction L-rhamnulose + ATP = L-rhamnulose 1-phosphate + ADP + H(+). The protein operates within carbohydrate degradation; L-rhamnose degradation; glycerone phosphate from L-rhamnose: step 2/3. Its function is as follows. Involved in the catabolism of L-rhamnose (6-deoxy-L-mannose). Catalyzes the transfer of the gamma-phosphate group from ATP to the 1-hydroxyl group of L-rhamnulose to yield L-rhamnulose 1-phosphate. This chain is Rhamnulokinase, found in Halalkalibacterium halodurans (strain ATCC BAA-125 / DSM 18197 / FERM 7344 / JCM 9153 / C-125) (Bacillus halodurans).